A 336-amino-acid polypeptide reads, in one-letter code: ATP-dependent 6-phosphofructokinase 3 (336 aa).

ATP-binding positions include Gly-10, 72-73, and 108-111; these read RE and GNGT. Asn-109 contacts Mg(2+). Substrate contacts are provided by residues 131–133, Arg-168, 175–177, Glu-228, Arg-255, and 261–264; these read TID, MGH, and YIQR. Asp-133 acts as the Proton acceptor in catalysis.

This sequence belongs to the phosphofructokinase type A (PFKA) family. Mixed-substrate PFK group III subfamily. Homodimer or homotetramer. It depends on Mg(2+) as a cofactor.

It is found in the cytoplasm. It carries out the reaction beta-D-fructose 6-phosphate + ATP = beta-D-fructose 1,6-bisphosphate + ADP + H(+). It participates in carbohydrate degradation; glycolysis; D-glyceraldehyde 3-phosphate and glycerone phosphate from D-glucose: step 3/4. Functionally, catalyzes the phosphorylation of D-fructose 6-phosphate to fructose 1,6-bisphosphate by ATP, the first committing step of glycolysis. This is ATP-dependent 6-phosphofructokinase 3 from Bacteroides thetaiotaomicron (strain ATCC 29148 / DSM 2079 / JCM 5827 / CCUG 10774 / NCTC 10582 / VPI-5482 / E50).